The primary structure comprises 119 residues: Protein FATTY ACID EXPORT 6 (119 aa).

A run of 3 helical transmembrane segments spans residues 27-47, 57-77, and 84-104; these read SITSFAGGAGTGLLLILAGYI, NSTIAMVLQTVIAAALTLVMG, and GKIMPAGLVAGISALMTCFYV.

Belongs to the TMEM14 family.

It localises to the membrane. Its function is as follows. May be involved in free fatty acids export. The protein is Protein FATTY ACID EXPORT 6 of Arabidopsis thaliana (Mouse-ear cress).